A 661-amino-acid chain; its full sequence is Heme transporter BhuA (661 aa).

Positions 1-23 are cleaved as a signal peptide; that stretch reads MKFTRTLVLASTSLLATVATSQA. The 112-residue stretch at 48 to 159 folds into the TBDR plug domain; it reads KDNIEATGGT…AAGAIRYETV (112 aa). Residues 170-661 enclose the TBDR beta-barrel domain; that stretch reads TFGARIIGSY…TFTFQTAFKF (492 aa).

It belongs to the TonB-dependent receptor family.

It localises to the cell outer membrane. Functionally, heme transporter. This Brucella ovis (strain ATCC 25840 / 63/290 / NCTC 10512) protein is Heme transporter BhuA (bhuA).